Consider the following 121-residue polypeptide: UPF0102 protein HRM2_30940 (121 aa).

It belongs to the UPF0102 family.

The sequence is that of UPF0102 protein HRM2_30940 from Desulforapulum autotrophicum (strain ATCC 43914 / DSM 3382 / VKM B-1955 / HRM2) (Desulfobacterium autotrophicum).